A 520-amino-acid chain; its full sequence is Ribonuclease Y (520 aa).

The chain crosses the membrane as a helical span at residues 3 to 23; sequence FILVLCTVSSLFVGGGTGIFL. Residues 209–272 enclose the KH domain; that stretch reads TVTAVTLPSE…QVAKMALERL (64 aa). An HD domain is found at 335–429; sequence VLRHSIEVAS…VQASDCLSGA (95 aa).

This sequence belongs to the RNase Y family.

It localises to the cell membrane. Endoribonuclease that initiates mRNA decay. This Lawsonia intracellularis (strain PHE/MN1-00) protein is Ribonuclease Y.